The chain runs to 324 residues: Biotin synthase (324 aa).

In terms of domain architecture, Radical SAM core spans 37–264 (NEVQVAALMN…ASYVRLAAGR (228 aa)). Positions 52, 56, and 59 each coordinate [4Fe-4S] cluster. Residues Cys96, Cys127, Cys187, and Arg259 each contribute to the [2Fe-2S] cluster site.

Belongs to the radical SAM superfamily. Biotin synthase family. Homodimer. The cofactor is [4Fe-4S] cluster. [2Fe-2S] cluster serves as cofactor.

The enzyme catalyses (4R,5S)-dethiobiotin + (sulfur carrier)-SH + 2 reduced [2Fe-2S]-[ferredoxin] + 2 S-adenosyl-L-methionine = (sulfur carrier)-H + biotin + 2 5'-deoxyadenosine + 2 L-methionine + 2 oxidized [2Fe-2S]-[ferredoxin]. Its pathway is cofactor biosynthesis; biotin biosynthesis; biotin from 7,8-diaminononanoate: step 2/2. In terms of biological role, catalyzes the conversion of dethiobiotin (DTB) to biotin by the insertion of a sulfur atom into dethiobiotin via a radical-based mechanism. This is Biotin synthase from Anaplasma marginale (strain Florida).